The chain runs to 366 residues: MITLKTTPFHQAHQDAGAKLVDFAGWELPIHYGSQIAEHEAVRTDAGMFDVSHMLVTDVAGANAKAFFRKLIANDVAKLAFVGKALYSALLNDNGGVIDDLIVYRTNEAETQYRIVSNGATREKDTAQFHKVGQEFGVSFNPRYDLGMLAVQGPKAIEKLLTVKPEWADVVHNLKPFQGADLGNDWFVARTGYTGEDGVEVILPGTEAVAFFKALQAAGVQPCGLGARDTLRMEAGMNLYGNDMDDDTSPLEAGMGWTVDLKDESRDFVGKAALLALKEKGVAVKQVGLLLGKGGILRAHMEVLTDKGKGETTSGVFSPSLKQSIAIARVPKDFDGDTAKVLIRGKEADVRVLKLPFVRNGQKQFD.

It belongs to the GcvT family. In terms of assembly, the glycine cleavage system is composed of four proteins: P, T, L and H.

The enzyme catalyses N(6)-[(R)-S(8)-aminomethyldihydrolipoyl]-L-lysyl-[protein] + (6S)-5,6,7,8-tetrahydrofolate = N(6)-[(R)-dihydrolipoyl]-L-lysyl-[protein] + (6R)-5,10-methylene-5,6,7,8-tetrahydrofolate + NH4(+). In terms of biological role, the glycine cleavage system catalyzes the degradation of glycine. This Neisseria meningitidis serogroup A / serotype 4A (strain DSM 15465 / Z2491) protein is Aminomethyltransferase.